We begin with the raw amino-acid sequence, 346 residues long: Ribosomal RNA small subunit methyltransferase H (346 aa).

S-adenosyl-L-methionine contacts are provided by residues Gly-46–Tyr-48, Asp-63, Phe-90, Asp-113, and Gln-120. Positions Gly-270–Ser-346 are disordered.

This sequence belongs to the methyltransferase superfamily. RsmH family.

It is found in the cytoplasm. The catalysed reaction is cytidine(1402) in 16S rRNA + S-adenosyl-L-methionine = N(4)-methylcytidine(1402) in 16S rRNA + S-adenosyl-L-homocysteine + H(+). Functionally, specifically methylates the N4 position of cytidine in position 1402 (C1402) of 16S rRNA. The polypeptide is Ribosomal RNA small subunit methyltransferase H (Brucella suis (strain ATCC 23445 / NCTC 10510)).